Reading from the N-terminus, the 421-residue chain is O-acetyl-L-homoserine sulfhydrylase 1 (421 aa).

Position 206 is an N6-(pyridoxal phosphate)lysine (lysine 206).

The protein belongs to the trans-sulfuration enzymes family. Homotetramer. It depends on pyridoxal 5'-phosphate as a cofactor.

The enzyme catalyses O-acetyl-L-homoserine + hydrogen sulfide = L-homocysteine + acetate. It functions in the pathway amino-acid biosynthesis; L-methionine biosynthesis via de novo pathway; L-homocysteine from O-acetyl-L-homoserine: step 1/1. With respect to regulation, inhibited by the carbonyl reagents hydroxylamine and phenylhydrazine. Also inhibited by methionine and propargylglycine. Functionally, catalyzes the conversion of O-acetyl-L-homoserine (OAH) into homocysteine in the methionine biosynthesis pathway. Has weak activity with O-acetyl-L-serine, O-phospho-L-serine, L-serine, O-succinyl-L-homoserine and L-homoserine. Shows low CTT beta-lyase activity and very low CTT gamma-synthase activity. This Thermus thermophilus (strain ATCC 27634 / DSM 579 / HB8) protein is O-acetyl-L-homoserine sulfhydrylase 1.